We begin with the raw amino-acid sequence, 361 residues long: Phosphoserine aminotransferase (361 aa).

Arg43 contacts L-glutamate. Positions 103, 153, 173, and 196 each coordinate pyridoxal 5'-phosphate. N6-(pyridoxal phosphate)lysine is present on Lys197. A pyridoxal 5'-phosphate-binding site is contributed by 238–239 (NT).

The protein belongs to the class-V pyridoxal-phosphate-dependent aminotransferase family. SerC subfamily. As to quaternary structure, homodimer. It depends on pyridoxal 5'-phosphate as a cofactor.

Its subcellular location is the cytoplasm. The catalysed reaction is O-phospho-L-serine + 2-oxoglutarate = 3-phosphooxypyruvate + L-glutamate. It carries out the reaction 4-(phosphooxy)-L-threonine + 2-oxoglutarate = (R)-3-hydroxy-2-oxo-4-phosphooxybutanoate + L-glutamate. Its pathway is amino-acid biosynthesis; L-serine biosynthesis; L-serine from 3-phospho-D-glycerate: step 2/3. The protein operates within cofactor biosynthesis; pyridoxine 5'-phosphate biosynthesis; pyridoxine 5'-phosphate from D-erythrose 4-phosphate: step 3/5. Catalyzes the reversible conversion of 3-phosphohydroxypyruvate to phosphoserine and of 3-hydroxy-2-oxo-4-phosphonooxybutanoate to phosphohydroxythreonine. This chain is Phosphoserine aminotransferase, found in Hahella chejuensis (strain KCTC 2396).